Reading from the N-terminus, the 425-residue chain is Enolase (425 aa).

(2R)-2-phosphoglycerate is bound at residue glutamine 163. The active-site Proton donor is the glutamate 205. Aspartate 242, glutamate 285, and aspartate 312 together coordinate Mg(2+). Residues lysine 337, arginine 366, serine 367, and lysine 388 each contribute to the (2R)-2-phosphoglycerate site. The Proton acceptor role is filled by lysine 337.

The protein belongs to the enolase family. The cofactor is Mg(2+).

It localises to the cytoplasm. It is found in the secreted. Its subcellular location is the cell surface. The enzyme catalyses (2R)-2-phosphoglycerate = phosphoenolpyruvate + H2O. Its pathway is carbohydrate degradation; glycolysis; pyruvate from D-glyceraldehyde 3-phosphate: step 4/5. Its function is as follows. Catalyzes the reversible conversion of 2-phosphoglycerate (2-PG) into phosphoenolpyruvate (PEP). It is essential for the degradation of carbohydrates via glycolysis. The protein is Enolase of Granulibacter bethesdensis (strain ATCC BAA-1260 / CGDNIH1).